The chain runs to 142 residues: Large ribosomal subunit protein mL42 (142 aa).

A mitochondrion-targeting transit peptide spans 1-31 (MAAAVKWAISNRTIWKHLLPIQNGALSSACH).

It belongs to the mitochondrion-specific ribosomal protein mL42 family. In terms of assembly, component of the mitochondrial ribosome large subunit (39S) which comprises a 16S rRNA and about 50 distinct proteins. Component of the mitochondrial ribosome small subunit (28S) which comprises a 12S rRNA and about 30 distinct proteins.

The protein resides in the mitochondrion. In Mus musculus (Mouse), this protein is Large ribosomal subunit protein mL42 (Mrpl42).